The following is a 174-amino-acid chain: Transcription antitermination protein NusB (174 aa).

The protein belongs to the NusB family.

Functionally, involved in transcription antitermination. Required for transcription of ribosomal RNA (rRNA) genes. Binds specifically to the boxA antiterminator sequence of the ribosomal RNA (rrn) operons. In Rhodopseudomonas palustris (strain ATCC BAA-98 / CGA009), this protein is Transcription antitermination protein NusB.